The sequence spans 770 residues: Potassium transporter 25 (770 aa).

Topologically, residues 1–23 (MDLEAAHGAAAAPGKRRRRARES) are cytoplasmic. A helical membrane pass occupies residues 24 to 44 (WGASLLLAYQSLGVVYGDVAT). The Extracellular segment spans residues 45–70 (SPLYVYKSAFAGDDIQHSAGNEEIYG). A helical membrane pass occupies residues 71–91 (VLSFVFWTLTLISLVKYVLIV). Topologically, residues 92–152 (LRADDGGEGG…MLERYRVLQR (61 aa)) are cytoplasmic. A helical membrane pass occupies residues 153–173 (LLLLFALLGTCMVIGDGVLTP). Over 174 to 194 (AVSVYSAVSGLELSMEHEHHK) the chain is Extracellular. Residues 195 to 215 (YVQLPVTCAILIGLFALQHYG) form a helical membrane-spanning segment. The Cytoplasmic portion of the chain corresponds to 216-218 (THR). Residues 219–239 (VGFIFAPIVCVWLLCISAIGV) traverse the membrane as a helical segment. Topologically, residues 240-267 (YNIVHWNHHVYRALSPYYMYQFLKKTQT) are extracellular. Residues 268–288 (GGWMSLGGILLCVTGSEAMYA) form a helical membrane-spanning segment. Over 289–299 (DLGHFSQSSIK) the chain is Cytoplasmic. The chain crosses the membrane as a helical span at residues 300–320 (IAFMSVVYPALVLAYMGQAAY). Residues 321–346 (ISQHHSFENAYHIGFYVSVPEKLRWP) lie on the Extracellular side of the membrane. The helical transmembrane segment at 347-367 (VLVIAILAAVVGSQAVITGTF) threads the bilayer. Residues 368 to 394 (SIIKQCSSLSCFPGVKIVHTSSTVHGQ) lie on the Cytoplasmic side of the membrane. A helical membrane pass occupies residues 395–415 (IYIPEINWILMILCLAVTLGF). Residues 416–425 (RNTKHLANAQ) lie on the Extracellular side of the membrane. A helical membrane pass occupies residues 426-446 (GLAVITVMLVTTCLMSLVIVL). The Cytoplasmic segment spans residues 447–451 (CWNKS). The helical transmembrane segment at 452–472 (IFLALGFLIFFGTIEVLYFSA) threads the bilayer. Over 473–479 (SLVKFHE) the chain is Extracellular. The helical transmembrane segment at 480-500 (GAWVPITLSFIFMIVMCVWHY) threads the bilayer. At 501–770 (GTIKKYEFDF…TLEVGMVYQV (270 aa)) the chain is on the cytoplasmic side.

This sequence belongs to the HAK/KUP transporter (TC 2.A.72.3) family.

The protein resides in the membrane. In terms of biological role, high-affinity potassium transporter. The polypeptide is Potassium transporter 25 (HAK25) (Oryza sativa subsp. japonica (Rice)).